Consider the following 236-residue polypeptide: 1-(5-phosphoribosyl)-5-[(5-phosphoribosylamino)methylideneamino] imidazole-4-carboxamide isomerase (236 aa).

The active-site Proton acceptor is aspartate 8. The Proton donor role is filled by aspartate 129.

Belongs to the HisA/HisF family.

It localises to the cytoplasm. It carries out the reaction 1-(5-phospho-beta-D-ribosyl)-5-[(5-phospho-beta-D-ribosylamino)methylideneamino]imidazole-4-carboxamide = 5-[(5-phospho-1-deoxy-D-ribulos-1-ylimino)methylamino]-1-(5-phospho-beta-D-ribosyl)imidazole-4-carboxamide. It functions in the pathway amino-acid biosynthesis; L-histidine biosynthesis; L-histidine from 5-phospho-alpha-D-ribose 1-diphosphate: step 4/9. In Methanoregula boonei (strain DSM 21154 / JCM 14090 / 6A8), this protein is 1-(5-phosphoribosyl)-5-[(5-phosphoribosylamino)methylideneamino] imidazole-4-carboxamide isomerase.